A 527-amino-acid polypeptide reads, in one-letter code: Mitochondrial substrate carrier family protein V (527 aa).

Over residues 1–14 the composition is skewed to basic and acidic residues; sequence MNSSDFKKSFKEST. Residues 1-29 are disordered; sequence MNSSDFKKSFKESTENNSNTYRPSKTLNT. Residues 1–132 are Mitochondrial intermembrane-facing; the sequence is MNSSDFKKSF…VSKKSISKEN (132 aa). Residues 15 to 29 are compositionally biased toward polar residues; that stretch reads ENNSNTYRPSKTLNT. Solcar repeat units follow at residues 130–220, 253–345, and 430–519; these read KENV…CKKH, MTVP…FKII, and VNMI…CKDL. A helical transmembrane segment spans residues 133–153; it reads VNYLVSGSIAGAISRSATAGF. Over 154–187 the chain is Mitochondrial matrix; the sequence is ERLTIIQQVQGMSQNLSQGYVGCIAAMKEMVKRE. The helical transmembrane segment at 188 to 208 threads the bilayer; it reads GFKSIWKGNGANIVKVSPNSG. Residues 209–258 lie on the Mitochondrial intermembrane side of the membrane; that stretch reads IRFLTYEFCKKHFLDNSSNHPSSSSIENGIDGNGVGCGSGSEMKMTVPQT. The chain crosses the membrane as a helical span at residues 259-279; the sequence is MFSGAMAGLTSTFFTYPLDVV. The Mitochondrial matrix portion of the chain corresponds to 280–324; it reads RIRLSLQGSCSNDYAAHRYNGITHSFFKIHKDEGVKGLYKGLGTS. Residues 325-345 traverse the membrane as a helical segment; the sequence is IASIVPWVSISFATYEGFKII. Residues 346-435 are Mitochondrial intermembrane-facing; that stretch reads CKKMILNYQI…LKKGVNMICD (90 aa). The helical transmembrane segment at 436–456 threads the bilayer; it reads FVCGALSGAVTMTVCYPLDVL. Residues 457–487 are Mitochondrial matrix-facing; that stretch reads RRRMMIQGIGGNKVLYKNGWDATKKILSNEG. Residues 488–508 form a helical membrane-spanning segment; it reads LVAFYHGIIPAYFKVVPTVAI. Residues 509 to 527 lie on the Mitochondrial intermembrane side of the membrane; it reads SFAVYEICKDLGSNKYQQK.

This sequence belongs to the mitochondrial carrier (TC 2.A.29) family.

It is found in the mitochondrion inner membrane. In terms of biological role, mitochondrial solute carriers shuttle metabolites, nucleotides, and cofactors through the mitochondrial inner membrane. The sequence is that of Mitochondrial substrate carrier family protein V (mcfV) from Dictyostelium discoideum (Social amoeba).